A 248-amino-acid polypeptide reads, in one-letter code: Probable transcriptional regulatory protein Mpop_0922 (248 aa).

Belongs to the TACO1 family.

The protein resides in the cytoplasm. The polypeptide is Probable transcriptional regulatory protein Mpop_0922 (Methylorubrum populi (strain ATCC BAA-705 / NCIMB 13946 / BJ001) (Methylobacterium populi)).